The primary structure comprises 265 residues: MSSQDTLTIAGKSYQSRLLVGTGKYKDFAETRAALDASGAQIVTVAIRRTNLGQNPGEPNLLDYVPPSRFTMLPNTAGCYTADDAVRTLRLARELLDGHDLVKLEVLGDPTNLFPNMPETLKAAKTLVDEGFKVMVYCTDDPIQCRMLEDIGVVAIMPLASLIGSGMGILNPWNLRLILDQSKLPVIVDAGLGTPSDAAVAMEMGCAAVLMNTAISGAKDPILMASAMKKGVEAGREAFLAGRVPRKLYSGVPSSPTEGLISTAK.

Lysine 103 (schiff-base intermediate with DXP) is an active-site residue. 1-deoxy-D-xylulose 5-phosphate-binding positions include glycine 164, 190-191, and 212-213; these read AG and NT.

It belongs to the ThiG family. In terms of assembly, homotetramer. Forms heterodimers with either ThiH or ThiS.

The protein localises to the cytoplasm. The catalysed reaction is [ThiS sulfur-carrier protein]-C-terminal-Gly-aminoethanethioate + 2-iminoacetate + 1-deoxy-D-xylulose 5-phosphate = [ThiS sulfur-carrier protein]-C-terminal Gly-Gly + 2-[(2R,5Z)-2-carboxy-4-methylthiazol-5(2H)-ylidene]ethyl phosphate + 2 H2O + H(+). Its pathway is cofactor biosynthesis; thiamine diphosphate biosynthesis. Its function is as follows. Catalyzes the rearrangement of 1-deoxy-D-xylulose 5-phosphate (DXP) to produce the thiazole phosphate moiety of thiamine. Sulfur is provided by the thiocarboxylate moiety of the carrier protein ThiS. In vitro, sulfur can be provided by H(2)S. This Bordetella avium (strain 197N) protein is Thiazole synthase.